We begin with the raw amino-acid sequence, 665 residues long: Ion-translocating oxidoreductase complex subunit C (665 aa).

2 consecutive 4Fe-4S ferredoxin-type domains span residues 368 to 398 (EYAEPEAEQACIRCSSCSDACPVNLMPQQLY) and 408 to 437 (KSEEYALKDCIECGICAYVCPSHIPLIQYF). Residues C378, C381, C384, C388, C417, C420, C423, and C427 each contribute to the [4Fe-4S] cluster site. Composition is skewed to basic and acidic residues over residues 465–477 (QARMEREEQERKA) and 485–513 (ARREELAQTKGEDPVKAALERLKAKKANE). Disordered regions lie at residues 465–568 (QARM…DAKK), 580–623 (AKKL…LDPK), and 637–665 (KKLAQANSTSEAISNSQTAENEVEKQIVR). Polar residues-rich tracts occupy residues 554–564 (VENQEQQTQPT) and 585–600 (QTNSTSEAISNSQTAE). Residues 602-615 (EVEKTKSAVEKTEE) show a composition bias toward basic and acidic residues. The span at 643 to 656 (NSTSEAISNSQTAE) shows a compositional bias: polar residues.

This sequence belongs to the 4Fe4S bacterial-type ferredoxin family. RnfC subfamily. As to quaternary structure, the complex is composed of six subunits: RnfA, RnfB, RnfC, RnfD, RnfE and RnfG. It depends on [4Fe-4S] cluster as a cofactor.

It is found in the cell inner membrane. In terms of biological role, part of a membrane-bound complex that couples electron transfer with translocation of ions across the membrane. The protein is Ion-translocating oxidoreductase complex subunit C of Haemophilus influenzae (strain 86-028NP).